The primary structure comprises 428 residues: Putative UDP-glucose 6-dehydrogenase YtcA (428 aa).

Positions 1 to 23 (MKICVVGAGYVGLTLSAALASIG) are cleaved as a signal peptide. NAD(+) contacts are provided by residues 2–19 (KICV…SAAL), Val-11, Asp-30, Lys-35, Thr-118, and Glu-152. Substrate is bound by residues 148-152 (EFLRE), Lys-203, Asn-207, 248-252 (FLQAG), and Gly-256. The Nucleophile role is filled by Cys-259. Lys-262 serves as a coordination point for NAD(+). Residue Lys-319 participates in substrate binding. An NAD(+)-binding site is contributed by Arg-326.

This sequence belongs to the UDP-glucose/GDP-mannose dehydrogenase family.

The enzyme catalyses UDP-alpha-D-glucose + 2 NAD(+) + H2O = UDP-alpha-D-glucuronate + 2 NADH + 3 H(+). Its pathway is nucleotide-sugar biosynthesis; UDP-alpha-D-glucuronate biosynthesis; UDP-alpha-D-glucuronate from UDP-alpha-D-glucose: step 1/1. Catalyzes the conversion of UDP-glucose into UDP-glucuronate, one of the precursors of teichuronic acid. The polypeptide is Putative UDP-glucose 6-dehydrogenase YtcA (ytcA) (Bacillus subtilis (strain 168)).